The sequence spans 759 residues: Hormone-sensitive lipase (759 aa).

The Involved in the stabilization of the negatively charged intermediate by the formation of the oxyanion hole signature appears at 349–351; sequence HGG. Residue serine 423 is part of the active site. The interval 534-553 is disordered; it reads GRKPQKTTSPTAESVRPTES. Serine 557 carries the phosphoserine modification. At serine 559 the chain carries Phosphoserine; by AMPK. The residue at position 574 (threonine 574) is a Phosphothreonine. Residues 583–604 are disordered; that stretch reads LSNSEPSDSPEMSQSMETLGPS. Over residues 585 to 604 the composition is skewed to polar residues; that stretch reads NSEPSDSPEMSQSMETLGPS. Residues serine 597, serine 618, serine 650, and serine 651 each carry the phosphoserine modification. Residues aspartate 694 and histidine 724 contribute to the active site.

It belongs to the 'GDXG' lipolytic enzyme family. Monomer and homodimer. Interacts with CAVIN1 in the adipocyte cytoplasm. Interacts with PLIN5. Phosphorylation by AMPK reduces its translocation towards the lipid droplets.

The protein resides in the cell membrane. The protein localises to the membrane. It localises to the caveola. It is found in the cytoplasm. Its subcellular location is the cytosol. The protein resides in the lipid droplet. The catalysed reaction is a diacylglycerol + H2O = a monoacylglycerol + a fatty acid + H(+). It catalyses the reaction a triacylglycerol + H2O = a diacylglycerol + a fatty acid + H(+). The enzyme catalyses a monoacylglycerol + H2O = glycerol + a fatty acid + H(+). It carries out the reaction Hydrolyzes glycerol monoesters of long-chain fatty acids.. The catalysed reaction is cholesteryl (9Z-octadecenoate) + H2O = cholesterol + (9Z)-octadecenoate + H(+). It catalyses the reaction all-trans-retinyl hexadecanoate + H2O = all-trans-retinol + hexadecanoate + H(+). The enzyme catalyses 1,2-di-(9Z-octadecenoyl)-glycerol + H2O = (9Z-octadecenoyl)-glycerol + (9Z)-octadecenoate + H(+). It carries out the reaction 2-(5Z,8Z,11Z,14Z-eicosatetraenoyl)-glycerol + H2O = glycerol + (5Z,8Z,11Z,14Z)-eicosatetraenoate + H(+). The catalysed reaction is 1-(9Z-octadecenoyl)-glycerol + H2O = glycerol + (9Z)-octadecenoate + H(+). It catalyses the reaction 2-(9Z-octadecenoyl)-glycerol + H2O = glycerol + (9Z)-octadecenoate + H(+). The enzyme catalyses 1-O-hexadecyl-2-acetyl-sn-glycerol + H2O = 1-O-hexadecyl-sn-glycerol + acetate + H(+). It carries out the reaction 1,2-di-(9Z-octadecenoyl)-sn-glycerol + H2O = (9Z-octadecenoyl)-glycerol + (9Z)-octadecenoate + H(+). The catalysed reaction is 1,3-di-(9Z-octadecenoyl)-glycerol + H2O = 1-(9Z-octadecenoyl)-glycerol + (9Z)-octadecenoate + H(+). It catalyses the reaction 1,2-di-(9Z-octadecenoyl)-glycerol + (9Z)-octadecenoate + H(+) = 1,2,3-tri-(9Z-octadecenoyl)-glycerol + H2O. The enzyme catalyses 2,3-di-(9Z)-octadecenoyl-sn-glycerol + H2O = 2-(9Z-octadecenoyl)-glycerol + (9Z)-octadecenoate + H(+). It carries out the reaction 1,2,3-tri-(9Z-octadecenoyl)-glycerol + H2O = di-(9Z)-octadecenoylglycerol + (9Z)-octadecenoate + H(+). The catalysed reaction is 1,2-di-(9Z-octadecenoyl)-glycerol + H2O = 2-(9Z-octadecenoyl)-glycerol + (9Z)-octadecenoate + H(+). Its pathway is glycerolipid metabolism; triacylglycerol degradation. Lipase with broad substrate specificity, catalyzing the hydrolysis of triacylglycerols (TAGs), diacylglycerols (DAGs), monoacylglycerols (MAGs), cholesteryl esters and retinyl esters. Shows a preferential hydrolysis of DAGs over TAGs and MAGs and of the fatty acid (FA) esters at the sn-1 and sn-2 positions of the glycerol backbone in TAGs. Preferentially hydrolyzes FA esters at the sn-3 position of the glycerol backbone in DAGs. Catalyzes the hydrolysis of 2-arachidonoylglycerol, an endocannabinoid and of 2-acetyl monoalkylglycerol ether, the penultimate precursor of the pathway for de novo synthesis of platelet-activating factor. In adipose tissue and heart, it primarily hydrolyzes stored triglycerides to free fatty acids, while in steroidogenic tissues, it principally converts cholesteryl esters to free cholesterol for steroid hormone production. The chain is Hormone-sensitive lipase (Lipe) from Mus musculus (Mouse).